A 458-amino-acid chain; its full sequence is uncharacterized protein (458 aa).

It belongs to the glycerate kinase type-2 family.

This is an uncharacterized protein from Caenorhabditis elegans.